The primary structure comprises 161 residues: Allophycocyanin alpha chain (161 aa).

Asn71 bears the N4-methylasparagine mark. Residue Cys81 participates in (2R,3E)-phycocyanobilin binding.

This sequence belongs to the phycobiliprotein family. As to quaternary structure, heterodimer of an alpha and a beta chain. Post-translationally, contains one covalently linked phycocyanobilin chromophore.

The protein localises to the cellular thylakoid membrane. Light-harvesting photosynthetic bile pigment-protein from the phycobiliprotein complex. Allophycocyanin has a maximum absorption at approximately 650 nanometers. This is Allophycocyanin alpha chain (apcA) from Synechocystis sp. (strain ATCC 27184 / PCC 6803 / Kazusa).